A 502-amino-acid chain; its full sequence is Lysine--tRNA ligase (502 aa).

Mg(2+) contacts are provided by Glu-411 and Glu-418.

This sequence belongs to the class-II aminoacyl-tRNA synthetase family. In terms of assembly, homodimer. Mg(2+) serves as cofactor.

Its subcellular location is the cytoplasm. The enzyme catalyses tRNA(Lys) + L-lysine + ATP = L-lysyl-tRNA(Lys) + AMP + diphosphate. This Clostridium kluyveri (strain ATCC 8527 / DSM 555 / NBRC 12016 / NCIMB 10680 / K1) protein is Lysine--tRNA ligase.